Consider the following 484-residue polypeptide: Probable chitinase 2 (484 aa).

The signal sequence occupies residues 1 to 33 (MTLRSRLSGEAPQLWLLLLLASTASSLWASVAA). The region spanning 41-432 (KVVVCYVSTW…RTINEATMLA (392 aa)) is the GH18 domain. Cysteine 45 and cysteine 70 are disulfide-bonded. Chitin contacts are provided by residues 98 to 99 (EE) and 125 to 128 (GGWN). Catalysis depends on glutamate 168, which acts as the Proton donor. Residues tyrosine 169, 231-234 (MCYD), and tryptophan 384 each bind chitin. Serine 467 carries the phosphoserine modification.

Belongs to the glycosyl hydrolase 18 family. Chitinase class II subfamily.

It catalyses the reaction Random endo-hydrolysis of N-acetyl-beta-D-glucosaminide (1-&gt;4)-beta-linkages in chitin and chitodextrins.. The sequence is that of Probable chitinase 2 from Drosophila melanogaster (Fruit fly).